The following is an 873-amino-acid chain: Actin-related protein 8 (873 aa).

Positions 108 to 129 are disordered; that stretch reads DEQVKPTSSTSSTSTTEEVEIK. The segment covering 114–123 has biased composition (low complexity); the sequence is TSSTSSTSTT. 368 to 371 provides a ligand contact to ATP; that stretch reads DLGH. Residues 596–650 show a composition bias toward low complexity; that stretch reads NNNNNNNNSSSSSNNNNNNNNSGSNSNINSYNNNNNNNNNNNNNNNNNNNNSFNN. Positions 596 to 701 are disordered; it reads NNNNNNNNSS…TSSPTKKLKI (106 aa). The span at 651-668 shows a compositional bias: polar residues; sequence VTIVTSTLNSNSTVPSTL. Positions 669–696 are enriched in low complexity; the sequence is NSNSTVPSISNSNSTVPSTSTSTTSSPT. The stretch at 762–804 forms a coiled coil; it reads FKQLEQQYQAQQLQFQQQLQQQQQQQQQLQQQLQNSTNSATTT.

This sequence belongs to the actin family. ARP8 subfamily. As to quaternary structure, component of the chromatin remodeling INO80 complex. Exists as monomers and dimers, but the dimer is most probably the biologically relevant form required for stable interactions with histones that exploits the twofold symmetry of the nucleosome core.

The protein localises to the nucleus. The protein resides in the cytoplasm. It is found in the cytoskeleton. Functionally, plays an important role in the functional organization of mitotic chromosomes. Exhibits low basal ATPase activity, and unable to polymerize. Proposed core component of the chromatin remodeling INO80 complex which is involved in transcriptional regulation, DNA replication and probably DNA repair. Strongly prefer nucleosomes and H3-H4 tetramers over H2A-H2B dimers, suggesting it may act as a nucleosome recognition module within the complex. The sequence is that of Actin-related protein 8 from Dictyostelium discoideum (Social amoeba).